Consider the following 104-residue polypeptide: MAGKAHRLSAEERDQLLPNLRAVGWNELEGRDAIFKQFHFKDFNRAFGFMTRVALQAEKLDHHPEWFNVYNKVHITLSTHECAGLSERDINLASFIEQVAVSMT.

Residue Ala2 is modified to N-acetylalanine. Substrate contacts are provided by residues 61-63 (DHH) and 78-81 (STHE).

This sequence belongs to the pterin-4-alpha-carbinolamine dehydratase family. Homotetramer and homodimer. Heterotetramer with HNF1A; formed by a dimer of dimers. Interacts with HNF1B (via HNF-p1 domain); the interaction increases HNF1B transactivation activity.

Its subcellular location is the cytoplasm. The protein resides in the nucleus. It carries out the reaction (4aS,6R)-4a-hydroxy-L-erythro-5,6,7,8-tetrahydrobiopterin = (6R)-L-erythro-6,7-dihydrobiopterin + H2O. Its function is as follows. Involved in tetrahydrobiopterin biosynthesis. Seems to both prevent the formation of 7-pterins and accelerate the formation of quinonoid-BH2. Coactivator for HNF1A-dependent transcription. Regulates the dimerization of homeodomain protein HNF1A and enhances its transcriptional activity. Also acts as a coactivator for HNF1B-dependent transcription. The chain is Pterin-4-alpha-carbinolamine dehydratase (Pcbd1) from Rattus norvegicus (Rat).